Consider the following 247-residue polypeptide: MPIDRQTLLSIAKSVRSGARSVRAQISPIHPKGYPFVGGFALATIILFWIWSPLGWIGTLLTIWCALFFRNPARVTPIREGLVVAPADGRISMIAPVVPPAELELGELPMVRISIFMSVFNCHVNRSPVAGRIERIVYRPGKFINAELDKASEDNERNALVISTPNNGLVGVIQIAGLIARRIVTFVHDGQTVETGERFGLIRFGSRLDVFLPEGTQVLVSEGQTTIAGETVLADFQQTDGRTFRSS.

Ser206 functions as the Schiff-base intermediate with substrate; via pyruvic acid in the catalytic mechanism. At Ser206 the chain carries Pyruvic acid (Ser); by autocatalysis.

This sequence belongs to the phosphatidylserine decarboxylase family. PSD-A subfamily. As to quaternary structure, heterodimer of a large membrane-associated beta subunit and a small pyruvoyl-containing alpha subunit. It depends on pyruvate as a cofactor. Post-translationally, is synthesized initially as an inactive proenzyme. Formation of the active enzyme involves a self-maturation process in which the active site pyruvoyl group is generated from an internal serine residue via an autocatalytic post-translational modification. Two non-identical subunits are generated from the proenzyme in this reaction, and the pyruvate is formed at the N-terminus of the alpha chain, which is derived from the carboxyl end of the proenzyme. The post-translation cleavage follows an unusual pathway, termed non-hydrolytic serinolysis, in which the side chain hydroxyl group of the serine supplies its oxygen atom to form the C-terminus of the beta chain, while the remainder of the serine residue undergoes an oxidative deamination to produce ammonia and the pyruvoyl prosthetic group on the alpha chain.

It localises to the cell membrane. It carries out the reaction a 1,2-diacyl-sn-glycero-3-phospho-L-serine + H(+) = a 1,2-diacyl-sn-glycero-3-phosphoethanolamine + CO2. It participates in phospholipid metabolism; phosphatidylethanolamine biosynthesis; phosphatidylethanolamine from CDP-diacylglycerol: step 2/2. Functionally, catalyzes the formation of phosphatidylethanolamine (PtdEtn) from phosphatidylserine (PtdSer). This chain is Phosphatidylserine decarboxylase proenzyme, found in Nitrobacter winogradskyi (strain ATCC 25391 / DSM 10237 / CIP 104748 / NCIMB 11846 / Nb-255).